The sequence spans 310 residues: UPF0282 protein PF0593 (310 aa).

It belongs to the UPF0282 family.

The polypeptide is UPF0282 protein PF0593 (Pyrococcus furiosus (strain ATCC 43587 / DSM 3638 / JCM 8422 / Vc1)).